Consider the following 577-residue polypeptide: Proline--tRNA ligase (577 aa).

The protein belongs to the class-II aminoacyl-tRNA synthetase family. ProS type 1 subfamily. In terms of assembly, homodimer.

Its subcellular location is the cytoplasm. It carries out the reaction tRNA(Pro) + L-proline + ATP = L-prolyl-tRNA(Pro) + AMP + diphosphate. In terms of biological role, catalyzes the attachment of proline to tRNA(Pro) in a two-step reaction: proline is first activated by ATP to form Pro-AMP and then transferred to the acceptor end of tRNA(Pro). As ProRS can inadvertently accommodate and process non-cognate amino acids such as alanine and cysteine, to avoid such errors it has two additional distinct editing activities against alanine. One activity is designated as 'pretransfer' editing and involves the tRNA(Pro)-independent hydrolysis of activated Ala-AMP. The other activity is designated 'posttransfer' editing and involves deacylation of mischarged Ala-tRNA(Pro). The misacylated Cys-tRNA(Pro) is not edited by ProRS. The polypeptide is Proline--tRNA ligase (Helicobacter pylori (strain P12)).